We begin with the raw amino-acid sequence, 493 residues long: Probable cytochrome P450 CYP36A1 (493 aa).

3 helical membrane-spanning segments follow: residues 1–21 (MLFA…CRFA), 60–80 (GGIF…YDML), and 290–310 (QLIV…IIVL). Cys-440 is a binding site for heme.

It belongs to the cytochrome P450 family. Heme serves as cofactor.

It is found in the membrane. Functionally, cytochromes P450 are a group of heme-thiolate monooxygenases. They oxidize a variety of structurally unrelated compounds, including steroids, fatty acids, and xenobiotics. In Caenorhabditis elegans, this protein is Probable cytochrome P450 CYP36A1 (cyp-36A1).